The primary structure comprises 180 residues: Negative modulator of initiation of replication (180 aa).

The interaction with DNA stretch occupies residues 87–88; it reads AV.

The protein belongs to the SeqA family. In terms of assembly, homodimer. Polymerizes to form helical filaments.

It localises to the cytoplasm. Its function is as follows. Negative regulator of replication initiation, which contributes to regulation of DNA replication and ensures that replication initiation occurs exactly once per chromosome per cell cycle. Binds to pairs of hemimethylated GATC sequences in the oriC region, thus preventing assembly of replication proteins and re-initiation at newly replicated origins. Repression is relieved when the region becomes fully methylated. The polypeptide is Negative modulator of initiation of replication (Ferrimonas balearica (strain DSM 9799 / CCM 4581 / KCTC 23876 / PAT)).